Consider the following 379-residue polypeptide: MRQTVKGCAVTIDQVSKAYGHCLAVDRATVHIRQGEFFSILGPSGCGKTTLLRIIAGFEQPDSGDLTFDHVSVLGVGANKRRSNTVFQSYALFPHLSVYENIAFPLRLKRLSKNLIRERVHEYLHLVQLDEHLHKKPHQLSGGQQQRVAIARALVCEPGVLLLDEPLSALDAKLRSNLLIELDTLHDQTGITFVFITHDQSEALSVSDRIAVMNKGKILQIGTPYEIYEQPATDFVAKFIGETNSFLSTVVSCTAIENEEFMLSLQVPELDRTLTVTADNPIDPGRRVCFTVRPEKIHISLEEPGTTSAPLNVFRGFVEEPVYAGFQSKFFVQLESGAIIQVFQQHQKYLDTGPEIAWKDTVYVSWSAHDGYVVEDIES.

Residues 10–240 (VTIDQVSKAY…PATDFVAKFI (231 aa)) form the ABC transporter domain. 42–49 (GPSGCGKT) serves as a coordination point for ATP.

Belongs to the ABC transporter superfamily. Spermidine/putrescine importer (TC 3.A.1.11.1) family. As to quaternary structure, the complex is composed of two ATP-binding proteins (PotA), two transmembrane proteins (PotB and PotC) and a solute-binding protein (PotD).

Its subcellular location is the cell inner membrane. It carries out the reaction ATP + H2O + polyamine-[polyamine-binding protein]Side 1 = ADP + phosphate + polyamineSide 2 + [polyamine-binding protein]Side 1.. In terms of biological role, part of the ABC transporter complex PotABCD involved in spermidine/putrescine import. Responsible for energy coupling to the transport system. The sequence is that of Spermidine/putrescine import ATP-binding protein PotA from Treponema pallidum (strain Nichols).